The sequence spans 388 residues: MKELRVYIVRYSEIGLKGKNRKDFEEALRRNIERVTGMKVKRQWGRFLIPIDENVTLDDKLKKIFGIQNFSKGFLVSHDFEEVKKYSLIAVKEKLEKGNYRTFKVQAKKAYKEYKKGVYEINSELGALILKNFKELSVDVRNPDFVLGVEVRPEGVLIFTDRVECYGGLPVGTGGKAVLLLSGGIDSPVAGWYALKRGVLIESVTFVSPPFTSEGAVEKVRDILRVLREFSGGHPLRLHIVNLTKLQLEVKKRVPDKYSLIMYRRSMFRIAEKIAEETGAVAFYTGENIGQVASQTLENLWSIESVTTRPVIRPLSGFDKTEIVEKAKEIGTYEISIKPYQDSCVFFAPKNPATRSHPSILEKLEQQVPDLPVLEEEAFTSRKVEVIE.

One can recognise a THUMP domain in the interval 55–162 (VTLDDKLKKI…PEGVLIFTDR (108 aa)). Residues 180–181 (LL), 205–206 (TF), Arg-264, Gly-286, and Gln-295 each bind ATP.

It belongs to the ThiI family.

It is found in the cytoplasm. The enzyme catalyses [ThiI sulfur-carrier protein]-S-sulfanyl-L-cysteine + a uridine in tRNA + 2 reduced [2Fe-2S]-[ferredoxin] + ATP + H(+) = [ThiI sulfur-carrier protein]-L-cysteine + a 4-thiouridine in tRNA + 2 oxidized [2Fe-2S]-[ferredoxin] + AMP + diphosphate. It catalyses the reaction [ThiS sulfur-carrier protein]-C-terminal Gly-Gly-AMP + S-sulfanyl-L-cysteinyl-[cysteine desulfurase] + AH2 = [ThiS sulfur-carrier protein]-C-terminal-Gly-aminoethanethioate + L-cysteinyl-[cysteine desulfurase] + A + AMP + 2 H(+). It participates in cofactor biosynthesis; thiamine diphosphate biosynthesis. In terms of biological role, catalyzes the ATP-dependent transfer of a sulfur to tRNA to produce 4-thiouridine in position 8 of tRNAs, which functions as a near-UV photosensor. Also catalyzes the transfer of sulfur to the sulfur carrier protein ThiS, forming ThiS-thiocarboxylate. This is a step in the synthesis of thiazole, in the thiamine biosynthesis pathway. The sulfur is donated as persulfide by IscS. The sequence is that of Probable tRNA sulfurtransferase from Thermotoga maritima (strain ATCC 43589 / DSM 3109 / JCM 10099 / NBRC 100826 / MSB8).